The chain runs to 198 residues: Recombination protein RecR (198 aa).

The segment at 58-73 (CLNCGNVGTSDICDIC) adopts a C4-type zinc-finger fold. One can recognise a Toprim domain in the interval 81–175 (GELCVVEDVA…RLTSLAQGVP (95 aa)).

It belongs to the RecR family.

In terms of biological role, may play a role in DNA repair. It seems to be involved in an RecBC-independent recombinational process of DNA repair. It may act with RecF and RecO. This chain is Recombination protein RecR, found in Ruegeria pomeroyi (strain ATCC 700808 / DSM 15171 / DSS-3) (Silicibacter pomeroyi).